A 795-amino-acid polypeptide reads, in one-letter code: Phenylalanine--tRNA ligase beta subunit (795 aa).

Residues 39-148 (AGTFNGVVVG…LDAPIGTDLR (110 aa)) form the tRNA-binding domain. One can recognise a B5 domain in the interval 401 to 476 (PKVNTVQLRR…RIYGYNSIPN (76 aa)). Residues Asp-454, Asp-460, Glu-463, and Glu-464 each coordinate Mg(2+). One can recognise an FDX-ACB domain in the interval 701–794 (SKFPANRRDL…VKQRFNAELR (94 aa)).

The protein belongs to the phenylalanyl-tRNA synthetase beta subunit family. Type 1 subfamily. In terms of assembly, tetramer of two alpha and two beta subunits. It depends on Mg(2+) as a cofactor.

The protein localises to the cytoplasm. It carries out the reaction tRNA(Phe) + L-phenylalanine + ATP = L-phenylalanyl-tRNA(Phe) + AMP + diphosphate + H(+). In Haemophilus influenzae (strain ATCC 51907 / DSM 11121 / KW20 / Rd), this protein is Phenylalanine--tRNA ligase beta subunit (pheT).